The following is a 1446-amino-acid chain: Centrosomal protein of 164 kDa (1446 aa).

Residues 1–195 (MARRPILLGD…PPQGLKAAAC (195 aa)) form an interaction with ATRIP region. The region spanning 56-89 (APLPKGWKPCQNITGDLYYFNFDTGQSIWDHPCD) is the WW domain. Disordered regions lie at residues 106-132 (PGAI…SKSP) and 159-185 (PPSA…EPTL). A compositionally biased stretch (basic residues) spans 109-121 (IKKKDKKKKKEKK). Polar residues predominate over residues 164-176 (RGSQSVSLGSSAD). Ser202 carries the phosphoserine modification. Disordered regions lie at residues 217-238 (EETN…SSEL), 250-408 (GGNF…SFLG), 424-570 (GDTL…EPAA), and 830-849 (KRQE…KEEH). The segment covering 218–228 (ETNEEDEEESD) has biased composition (acidic residues). Residues 257 to 277 (ESPRTSQPDKKDVSLDSDADR) show a composition bias toward basic and acidic residues. The segment covering 288-312 (GADSSVASANGSKSQGRGASPWNPQ) has biased composition (polar residues). Basic and acidic residues-rich tracts occupy residues 355–372 (KEGE…KEAS) and 384–397 (SEIH…RHSG). Polar residues predominate over residues 451–461 (SSIAEPQSKHT). Basic and acidic residues-rich tracts occupy residues 490-499 (PEWKEAEGPG) and 525-534 (ERAEEKHSQA). Positions 1143-1197 (EVLGNMRKNLNEETRHLDEMKSAMRKGHDLLKKKEEKLIQLESSLQEEVSDEDTL) form a coiled coil. Residues 1261–1287 (LGSLNSQPPPQGLGSQPPPPLFTSSLR) form a disordered region. Residues 1267–1281 (QPPPQGLGSQPPPPL) are compositionally biased toward pro residues. Ser1369 and Ser1371 each carry phosphoserine.

In terms of assembly, interacts (via N-terminus) with ATRIP. Interacts with ATM, ATR and MDC1. Interacts with XPA (via N-terminus) upon UV irradiation. Interacts with CEP83, CCDC92, TTBK2, DVL3, NPHP3 and weakly with NPHP4. Interacts with DZIP1.

It localises to the cytoplasm. The protein resides in the cytoskeleton. The protein localises to the microtubule organizing center. Its subcellular location is the centrosome. It is found in the centriole. It localises to the nucleus. Plays a role in microtubule organization and/or maintenance for the formation of primary cilia (PC), a microtubule-based structure that protrudes from the surface of epithelial cells. Plays a critical role in G2/M checkpoint and nuclear divisions. A key player in the DNA damage-activated ATR/ATM signaling cascade since it is required for the proper phosphorylation of H2AX, RPA, CHEK2 and CHEK1. Plays a critical role in chromosome segregation, acting as a mediator required for the maintenance of genomic stability through modulation of MDC1, RPA and CHEK1. This Mus musculus (Mouse) protein is Centrosomal protein of 164 kDa.